We begin with the raw amino-acid sequence, 315 residues long: Acetaldehyde dehydrogenase 1 (315 aa).

12–15 is a binding site for NAD(+); sequence SGNI. Cysteine 132 (acyl-thioester intermediate) is an active-site residue. NAD(+)-binding positions include 163–171 and asparagine 291; that span reads SAGPGTRAN.

This sequence belongs to the acetaldehyde dehydrogenase family.

It carries out the reaction acetaldehyde + NAD(+) + CoA = acetyl-CoA + NADH + H(+). This is Acetaldehyde dehydrogenase 1 from Paraburkholderia phymatum (strain DSM 17167 / CIP 108236 / LMG 21445 / STM815) (Burkholderia phymatum).